A 456-amino-acid polypeptide reads, in one-letter code: N(6)-adenosine-methyltransferase non-catalytic subunit METTL14 (456 aa).

The span at 39-51 (DEQREIAETRETS) shows a compositional bias: basic and acidic residues. A disordered region spans residues 39-74 (DEQREIAETRETSRASYDTSATVSKRKMPEEGEADE). Residues 52–61 (RASYDTSATV) are compositionally biased toward polar residues. Interaction with METTL3 regions lie at residues 135–136 (RD) and 237–238 (SG). Residues 245–254 (RMCLRKWGFR) form a positively charged region required for RNA-binding region. Interaction with METTL3 stretches follow at residues 255–258 (RSED) and 278–287 (KAIFQRTKEH). Residues 297 to 298 (HR) form a positively charged region required for RNA-binding region. The interaction with METTL3 stretch occupies residues 308–312 (NVDID). The disordered stretch occupies residues 395–456 (LRPKTPPPKS…GPHRGVFAPR (62 aa)). Residues 410–421 (ASRGGGRGGPSA) are compositionally biased toward gly residues. Residues 423-441 (RGERGRERNRGSFRGDRGN) show a composition bias toward basic and acidic residues.

This sequence belongs to the MT-A70-like family. Heterodimer; heterodimerizes with mettl3 to form an antiparallel heterodimer that constitutes an active methyltransferase. Component of the WMM complex, a N6-methyltransferase complex composed of a catalytic subcomplex, named MAC, and of an associated subcomplex, named MACOM. The MAC subcomplex is composed of mettl3 and mettl14.

It localises to the nucleus. Functionally, the METTL3-METTL14 heterodimer forms a N6-methyltransferase complex that methylates adenosine residues at the N(6) position of some mRNAs and regulates the circadian clock, differentiation of embryonic stem cells and cortical neurogenesis. In the heterodimer formed with mettl3, mettl14 constitutes the RNA-binding scaffold that recognizes the substrate rather than the catalytic core. N6-methyladenosine (m6A), which takes place at the 5'-[AG]GAC-3' consensus sites of some mRNAs, plays a role in mRNA stability and processing. The polypeptide is N(6)-adenosine-methyltransferase non-catalytic subunit METTL14 (mettl14) (Xenopus tropicalis (Western clawed frog)).